A 211-amino-acid chain; its full sequence is Metalloproteinase inhibitor 3 (211 aa).

Residues 1 to 23 (MTPWLGLIVLLGSWSLGDWGAEA) form the signal peptide. Position 24 (Cys-24) interacts with Zn(2+). 2 involved in metalloproteinase-binding regions span residues 24-27 (CTCS) and 88-89 (ES). 6 disulfide bridges follow: Cys-24–Cys-91, Cys-26–Cys-118, Cys-36–Cys-143, Cys-145–Cys-192, Cys-150–Cys-155, and Cys-163–Cys-184. Residues 24–143 (CTCSPSHPQD…GLNYRYHLGC (120 aa)) form the NTR domain. The interval 105 to 188 (TGRVYDGKMY…SKHYACIRQK (84 aa)) is mediates interaction with EFEMP1. Asn-207 carries an N-linked (GlcNAc...) asparagine glycan.

The protein belongs to the protease inhibitor I35 (TIMP) family. As to quaternary structure, interacts with EFEMP1. Interacts with KDR.

It localises to the secreted. It is found in the extracellular space. The protein localises to the extracellular matrix. Mediates a variety of processes including matrix regulation and turnover, inflammation, and angiogenesis, through reversible inhibition of zinc protease superfamily enzymes, primarily matrix metalloproteinases (MMPs). Regulates extracellular matrix (ECM) remodeling through inhibition of matrix metalloproteinases (MMP) including MMP-1, MMP-2, MMP-3, MMP-7, MMP-9, MMP-13, MMP-14 and MMP-15. Additionally, modulates the processing of amyloid precursor protein (APP) and apolipoprotein E receptor ApoER2 by inhibiting two alpha-secretases ADAM10 and ADAM17. Functions as a tumor suppressor and a potent inhibitor of angiogenesis. Exerts its anti-angiogenic effect by directly interacting with vascular endothelial growth factor (VEGF) receptor-2/KDR, preventing its binding to the VEGFA ligand. Selectively induces apoptosis in angiogenic endothelial cells through a caspase-independent cell death pathway. Mechanistically, inhibits matrix-induced focal adhesion kinase PTK2 tyrosine phosphorylation and association with paxillin/PXN and disrupts the incorporation of ITGB3, PTK2 and PXN into focal adhesion contacts on the matrix. The polypeptide is Metalloproteinase inhibitor 3 (TIMP3) (Macaca mulatta (Rhesus macaque)).